The following is a 251-amino-acid chain: 4-hydroxy-tetrahydrodipicolinate reductase (251 aa).

NAD(+) contacts are provided by residues 9-14 (GCNGKM), 85-87 (ATT), and 109-112 (SANM). His-141 serves as the catalytic Proton donor/acceptor. His-142 provides a ligand contact to (S)-2,3,4,5-tetrahydrodipicolinate. Lys-145 functions as the Proton donor in the catalytic mechanism. 151–152 (GT) lines the (S)-2,3,4,5-tetrahydrodipicolinate pocket.

Belongs to the DapB family.

The protein localises to the cytoplasm. The enzyme catalyses (S)-2,3,4,5-tetrahydrodipicolinate + NAD(+) + H2O = (2S,4S)-4-hydroxy-2,3,4,5-tetrahydrodipicolinate + NADH + H(+). The catalysed reaction is (S)-2,3,4,5-tetrahydrodipicolinate + NADP(+) + H2O = (2S,4S)-4-hydroxy-2,3,4,5-tetrahydrodipicolinate + NADPH + H(+). It functions in the pathway amino-acid biosynthesis; L-lysine biosynthesis via DAP pathway; (S)-tetrahydrodipicolinate from L-aspartate: step 4/4. Catalyzes the conversion of 4-hydroxy-tetrahydrodipicolinate (HTPA) to tetrahydrodipicolinate. In Caldanaerobacter subterraneus subsp. tengcongensis (strain DSM 15242 / JCM 11007 / NBRC 100824 / MB4) (Thermoanaerobacter tengcongensis), this protein is 4-hydroxy-tetrahydrodipicolinate reductase.